Here is a 331-residue protein sequence, read N- to C-terminus: Glycerol-3-phosphate dehydrogenase [NAD(P)+] (331 aa).

4 residues coordinate NADPH: S11, F12, R32, and K106. Positions 106, 134, and 136 each coordinate sn-glycerol 3-phosphate. A138 contacts NADPH. Sn-glycerol 3-phosphate-binding residues include K189, D242, S252, R253, and N254. The Proton acceptor role is filled by K189. Residue R253 participates in NADPH binding. Residues V277 and E279 each contribute to the NADPH site.

The protein belongs to the NAD-dependent glycerol-3-phosphate dehydrogenase family.

The protein localises to the cytoplasm. It catalyses the reaction sn-glycerol 3-phosphate + NAD(+) = dihydroxyacetone phosphate + NADH + H(+). The enzyme catalyses sn-glycerol 3-phosphate + NADP(+) = dihydroxyacetone phosphate + NADPH + H(+). It participates in membrane lipid metabolism; glycerophospholipid metabolism. In terms of biological role, catalyzes the reduction of the glycolytic intermediate dihydroxyacetone phosphate (DHAP) to sn-glycerol 3-phosphate (G3P), the key precursor for phospholipid synthesis. This is Glycerol-3-phosphate dehydrogenase [NAD(P)+] from Clostridium perfringens (strain SM101 / Type A).